A 313-amino-acid chain; its full sequence is MAAEEEDEVEWVVESIAGFLRGPDWSIPILDFVEQKCEVFDDEEESKLTYTEIHQEYKELVEKLLETYLKEIGINEDQFQEACTSPLAKTRTSQAILQPVLAAEDFTIFKAMMVEKNTEMQLQAIRIIQERNGVLPDCLTDGSDVVSDLEQEEMKILKEVLRKSKEEYDQEEERKRKKQLSEAKTEEHPMQANETAKMSNSQGDGEHFAHPASGLKIPGFEHASMEGPIANLSTLRTEELRQREHYLKQKRDKLMSMRKDMKIKQNQTSEQKGKPAGEVEEMTEKPEMTAEEKQTLLKRRLLAEKLKEEVINK.

Phosphoserine is present on residues S85 and S147. Positions 147 to 187 (SDLEQEEMKILKEVLRKSKEEYDQEEERKRKKQLSEAKTEE) form a coiled coil. 2 disordered regions span residues 165-204 (KEEYDQEEERKRKKQLSEAKTEEHPMQANETAKMSNSQGD) and 262-292 (KIKQNQTSEQKGKPAGEVEEMTEKPEMTAEE). The segment covering 179–189 (QLSEAKTEEHP) has biased composition (basic and acidic residues). Polar residues predominate over residues 192–203 (ANETAKMSNSQG). S201 carries the post-translational modification Phosphoserine. The span at 271-292 (QKGKPAGEVEEMTEKPEMTAEE) shows a compositional bias: basic and acidic residues.

Belongs to the CFAP36 family. In terms of assembly, interacts with ARL3.

Its subcellular location is the nucleus. The protein localises to the cytoplasm. The protein resides in the cell projection. It localises to the cilium. It is found in the flagellum. Functionally, may act as an effector for ARL3. This chain is Cilia- and flagella-associated protein 36, found in Bos taurus (Bovine).